The chain runs to 301 residues: Homoserine kinase (301 aa).

81–91 (RPSSGLGSSAA) provides a ligand contact to ATP.

The protein belongs to the GHMP kinase family. Homoserine kinase subfamily.

It is found in the cytoplasm. The enzyme catalyses L-homoserine + ATP = O-phospho-L-homoserine + ADP + H(+). It participates in amino-acid biosynthesis; L-threonine biosynthesis; L-threonine from L-aspartate: step 4/5. Catalyzes the ATP-dependent phosphorylation of L-homoserine to L-homoserine phosphate. This Halobacterium salinarum (strain ATCC 29341 / DSM 671 / R1) protein is Homoserine kinase.